Consider the following 165-residue polypeptide: Large ribosomal subunit protein uL11 (165 aa).

Residue Ser-38 is modified to Phosphoserine. Lys-40 is covalently cross-linked (Glycyl lysine isopeptide (Lys-Gly) (interchain with G-Cter in SUMO2)). A Glycyl lysine isopeptide (Lys-Gly) (interchain with G-Cter in ubiquitin) cross-link involves residue Lys-48. At Lys-54 the chain carries N6-acetyllysine. Lys-83 participates in a covalent cross-link: Glycyl lysine isopeptide (Lys-Gly) (interchain with G-Cter in ubiquitin). Residue Ser-165 is modified to Phosphoserine.

Belongs to the universal ribosomal protein uL11 family. In terms of assembly, component of the large ribosomal subunit. Mature ribosomes consist of a small (40S) and a large (60S) subunit. The 40S subunit contains about 33 different proteins and 1 molecule of RNA (18S). The 60S subunit contains about 49 different proteins and 3 molecules of RNA (28S, 5.8S and 5S). In terms of processing, ubiquitinated at Lys-48 and Lys-83 by RNF14 and RNF25 in response to ribosome collisions (ribosome stalling).

It is found in the cytoplasm. In terms of biological role, component of the large ribosomal subunit. The ribosome is a large ribonucleoprotein complex responsible for the synthesis of proteins in the cell. Binds directly to 26S ribosomal RNA. The sequence is that of Large ribosomal subunit protein uL11 (Rpl12) from Rattus norvegicus (Rat).